Consider the following 879-residue polypeptide: Alanine--tRNA ligase (879 aa).

Residues His-566, His-570, Cys-668, and His-672 each contribute to the Zn(2+) site.

Belongs to the class-II aminoacyl-tRNA synthetase family. It depends on Zn(2+) as a cofactor.

It is found in the cytoplasm. It catalyses the reaction tRNA(Ala) + L-alanine + ATP = L-alanyl-tRNA(Ala) + AMP + diphosphate. In terms of biological role, catalyzes the attachment of alanine to tRNA(Ala) in a two-step reaction: alanine is first activated by ATP to form Ala-AMP and then transferred to the acceptor end of tRNA(Ala). Also edits incorrectly charged Ser-tRNA(Ala) and Gly-tRNA(Ala) via its editing domain. In Clostridium perfringens (strain ATCC 13124 / DSM 756 / JCM 1290 / NCIMB 6125 / NCTC 8237 / Type A), this protein is Alanine--tRNA ligase.